Consider the following 381-residue polypeptide: Putative glycosyltransferase EpsD (381 aa).

Belongs to the glycosyltransferase group 1 family. Glycosyltransferase 4 subfamily.

In terms of biological role, may be involved in the production of the exopolysaccharide (EPS) component of the extracellular matrix during biofilm formation. EPS is responsible for the adhesion of chains of cells into bundles. Required for biofilm maintenance. In Bacillus subtilis (strain 168), this protein is Putative glycosyltransferase EpsD (epsD).